Consider the following 1020-residue polypeptide: MQATAVVETDSDKSYHKNGGHLQNDKLYYPKKENMLFSNGCNRVKLTFPDGEGDSLTTDERTNVKENSSVDKRDLSELSFSETQDTNVENLFSQSSEFEDNIEYAFLNETYSIHYSESKLKDENILHLYSELDPEVHERVEVFFDTFGPQGNNDIGLGRSCEALGSACGDMQKSDVREDSQQEYHSAELECLSAHLAVDPAKTVSRSSLDVSEWRTSSYTFKCGGNLEVNRGKLESGPIPFLESLNGFSPKCSPQVSTSPSSDMLKEYHEPKYEKYKEQEVGLTYHKTFDDILQRSSSPLNSQKVPEPLVYAKEMKSQTIEGKDFYGDRIFQNRALQHPENAMFPQDHALETPLKALDAHQLSGPYVLDDSVISLCGSLQYNSLPEPGFYSPVMPRVAVTDSQAEVAGSCLHHVQGSATNKTCSLMKEMCLKSGPDAANCVALGQQTLDVSGRANVSSSVVSTASTTETKTVRRSQPEEWQRDRQSVACNTDWSCGQQCRSARAAALGSDSGRPLSTDCLNCGNSMDENSLELRKTPDKQRHPERAFQLCEEMALPSKCCEKTTERAVKAETHLLDVCYQMCHHHCHHIYKLVMGSRAGLSRNLPTDSAQKELGTALLSVLEDLKARYMNLKGKVHKGIPLEELPPLSVESKLLSAFSDFASRLMKEEACSLSGANSELDNQSLPEVAISPSLLKTLSQMSSISDSSHPKQDKLPMNNIFKNCDINIDFNHLKLNDKESKNVHEASEDWFDATERLTGTDFSVTQENITESEDWDPKNPLESELKTIERLRRGKGFLIHVGGLCPSVSEADLRSHFQKYQVSEISIYDSNTNYRYASLACAKNSNAKMAVKEMNGVEINGKSVNVRLVKIPGEYIPPLLSTAGNNISMNHLERNSSKDATSAASTCRLPIARSGQLESEQDSEFLPLVQGVRENCNQVKSGQSLPETPFQFIPPHTLNLRSFTKIMKRLAELHPEISRDHIIEALQEVRINHKGFLNGLSINTIVKMTSSFLRNAASRLK.

Disordered stretches follow at residues 1–23 (MQAT…GHLQ) and 50–70 (DGEG…NSSV). Residues 58–70 (TDERTNVKENSSV) show a composition bias toward basic and acidic residues. Residues S249, S371, S374, S516, S683, and S690 each carry the phosphoserine modification. An RRM domain is found at 796–870 (FLIHVGGLCP…KSVNVRLVKI (75 aa)).

As to quaternary structure, homodimer. Interacts with TEX14.

Its subcellular location is the cytoplasm. Its function is as follows. Component of intercellular bridges during meiosis. Intercellular bridges are evolutionarily conserved structures that connect differentiating germ cells. Not required for fertility. This chain is RNA-binding protein 44 (Rbm44), found in Rattus norvegicus (Rat).